A 349-amino-acid chain; its full sequence is AA9 family lytic polysaccharide monooxygenase A (349 aa).

The first 19 residues, 1-19, serve as a signal peptide directing secretion; it reads MKSTFGLLALAAAAKLVSA. Residues H20 and H102 each coordinate Cu(2+). A disulfide bridge links C62 with C183. H169 serves as a coordination point for O2. Residue Y180 coordinates Cu(2+). Residues 233–304 are disordered; the sequence is DGSSSGSSGS…SGSNSGSDSC (72 aa). Low complexity-rich tracts occupy residues 234 to 262 and 269 to 304; these read GSSS…AVPT and TSAT…SDSC. Residues 311–347 enclose the CBM1 domain; it reads GSVKIYGQCGGQNYSGPTSCEAGLICKEWNPYYHQCV. A glycan (N-linked (GlcNAc...) asparagine) is linked at N323.

The protein belongs to the polysaccharide monooxygenase AA9 family. It depends on Cu(2+) as a cofactor.

It is found in the secreted. The enzyme catalyses [(1-&gt;4)-beta-D-glucosyl]n+m + reduced acceptor + O2 = 4-dehydro-beta-D-glucosyl-[(1-&gt;4)-beta-D-glucosyl]n-1 + [(1-&gt;4)-beta-D-glucosyl]m + acceptor + H2O.. Functionally, lytic polysaccharide monooxygenase (LPMO) that depolymerizes crystalline and amorphous polysaccharides via the oxidation of scissile alpha- or beta-(1-4)-glycosidic bonds, yielding C4 oxidation products. Catalysis by LPMOs requires the reduction of the active-site copper from Cu(II) to Cu(I) by a reducing agent and H(2)O(2) or O(2) as a cosubstrate. This is AA9 family lytic polysaccharide monooxygenase A (eglD) from Aspergillus fumigatus (strain CBS 144.89 / FGSC A1163 / CEA10) (Neosartorya fumigata).